Here is a 262-residue protein sequence, read N- to C-terminus: Hemin import ATP-binding protein HmuV (262 aa).

Residues 2–241 (IRASDISVRL…ETMEAVFGCR (240 aa)) enclose the ABC transporter domain. 34–41 (GPNGSGKT) serves as a coordination point for ATP.

The protein belongs to the ABC transporter superfamily. Heme (hemin) importer (TC 3.A.1.14.5) family. In terms of assembly, the complex is composed of two ATP-binding proteins (HmuV), two transmembrane proteins (HmuU) and a solute-binding protein (HmuT).

The protein resides in the cell inner membrane. Functionally, part of the ABC transporter complex HmuTUV involved in hemin import. Responsible for energy coupling to the transport system. This Rhizobium meliloti (strain 1021) (Ensifer meliloti) protein is Hemin import ATP-binding protein HmuV.